Consider the following 436-residue polypeptide: MSVTVEILENLERKVVLSLPWSEINAETDKKLKQTQRRAKIDGFRPGKAPLKMIAQMYGASAQNDVINELVQRRFYDVAVAQELKVAGYPRFEGVEEQDDKESFKVAAIFEVFPEVVIGDLSAQEVEKVTASVGDAEVDQTVEILRKQRTRFNHVDREARNGDRVIIDFEGKIDGEPFAGGTSKNYAFVLGAGQMLPEFEAGVVGMKAGESKDVTVNFPEEYHGKDVAGKTAVFTITLNNVSEPTLPEVDADFAKALGIADGDVAKMREEVKKNVSREVERRVNEQTKESVMNALIKAVELKVPVALVNEEAARLANEMKQNFVNQGMTDAANLDLPLDMFKEQAERRVSLGLILAKLVDENKLEPTEGQIKAVVANFAESYEDPQEVIDWYYADTSRLQAPTSLAVESNVVDFVLGKAKVNKKALSFDEVMGAQA.

One can recognise a PPIase FKBP-type domain in the interval 162–247 (GDRVIIDFEG…LNNVSEPTLP (86 aa)).

Belongs to the FKBP-type PPIase family. Tig subfamily.

The protein localises to the cytoplasm. The catalysed reaction is [protein]-peptidylproline (omega=180) = [protein]-peptidylproline (omega=0). Functionally, involved in protein export. Acts as a chaperone by maintaining the newly synthesized protein in an open conformation. Functions as a peptidyl-prolyl cis-trans isomerase. This Neisseria gonorrhoeae (strain ATCC 700825 / FA 1090) protein is Trigger factor.